The primary structure comprises 338 residues: Histidinol-phosphate aminotransferase (338 aa).

Lys-204 bears the N6-(pyridoxal phosphate)lysine mark.

This sequence belongs to the class-II pyridoxal-phosphate-dependent aminotransferase family. Histidinol-phosphate aminotransferase subfamily. Pyridoxal 5'-phosphate serves as cofactor.

The enzyme catalyses L-histidinol phosphate + 2-oxoglutarate = 3-(imidazol-4-yl)-2-oxopropyl phosphate + L-glutamate. The protein operates within amino-acid biosynthesis; L-histidine biosynthesis; L-histidine from 5-phospho-alpha-D-ribose 1-diphosphate: step 7/9. This chain is Histidinol-phosphate aminotransferase, found in Pyrococcus furiosus (strain ATCC 43587 / DSM 3638 / JCM 8422 / Vc1).